Consider the following 221-residue polypeptide: F-box protein At1g55000 (221 aa).

Residues 7–46 enclose the F-box domain; that stretch reads DTLIIIFQKLTVADLARASCVCKVWNSVATEDDLVVSAFT. The region spanning 74-118 is the LysM domain; sequence ISHRICRGDSVTSLAVKYAVQVMDIKRLNNMMSDHGIYSRDRLLI.

Part of a SCF (ASK-cullin-F-box) protein ligase complex. Interacts with SKP1A/ASK1, SKP1B/ASK2, ASK4, ASK11 and ASK13.

It participates in protein modification; protein ubiquitination. Its function is as follows. Component of SCF(ASK-cullin-F-box) E3 ubiquitin ligase complexes, which may mediate the ubiquitination and subsequent proteasomal degradation of target proteins. This chain is F-box protein At1g55000, found in Arabidopsis thaliana (Mouse-ear cress).